The chain runs to 605 residues: UvrABC system protein C (605 aa).

Positions 13-92 (TSPGVYLMKD…IKKHHPKYNV (80 aa)) constitute a GIY-YIG domain. Residues 205 to 240 (SEIIQDLEKSIEKASQEQKFEQAGIYYRTLKLIQQA) enclose the UVR domain.

This sequence belongs to the UvrC family. As to quaternary structure, interacts with UvrB in an incision complex.

The protein localises to the cytoplasm. In terms of biological role, the UvrABC repair system catalyzes the recognition and processing of DNA lesions. UvrC both incises the 5' and 3' sides of the lesion. The N-terminal half is responsible for the 3' incision and the C-terminal half is responsible for the 5' incision. The polypeptide is UvrABC system protein C (Chlamydia caviae (strain ATCC VR-813 / DSM 19441 / 03DC25 / GPIC) (Chlamydophila caviae)).